A 663-amino-acid polypeptide reads, in one-letter code: Protein-arginine deiminase type-4 (663 aa).

Ca(2+) is bound by residues asparagine 153, aspartate 155, aspartate 157, aspartate 165, aspartate 168, glutamate 170, aspartate 176, and aspartate 179. 3 positions are modified to citrulline: arginine 205, arginine 212, and arginine 218. Glutamine 349 lines the Ca(2+) pocket. Aspartate 350 is a catalytic residue. Ca(2+)-binding residues include glutamate 351, glutamate 353, aspartate 369, and serine 370. Arginine 372 carries the post-translational modification Citrulline. Asparagine 373 provides a ligand contact to Ca(2+). Arginine 374 and arginine 383 each carry citrulline. Arginine 374 is a substrate binding site. Ca(2+)-binding residues include aspartate 388, phenylalanine 407, leucine 410, and glutamate 411. Active-site residues include histidine 471 and aspartate 473. A substrate-binding site is contributed by arginine 639. Cysteine 645 is an active-site residue.

The protein belongs to the protein arginine deiminase family. Ca(2+) serves as cofactor. In terms of processing, autocitrullination at Arg-372 and Arg-374 inactivates the enzyme. In terms of tissue distribution, expressed in eosinophils and neutrophils, not expressed in peripheral monocytes or lymphocytes.

The protein localises to the cytoplasm. The protein resides in the nucleus. Its subcellular location is the cytoplasmic granule. It carries out the reaction L-arginyl-[protein] + H2O = L-citrullyl-[protein] + NH4(+). Its activity is regulated as follows. Strongly Inhibited by F-amidine and N-alpha-benzoyl-N5-(2-chloro-1-iminoethyl)-L-ornithine amide (Cl-amidine). These inhibitors are however not specific to PADI4 and also inhibit other members of the family. Incorporation of a carboxylate ortho to the backbone amide of Cl-amidine results in inhibitors with increased specificity for PADI4: N-alpha-(2-carboxyl)benzoyl-N(5)-(2-fluoro-1-iminoethyl)-L-ornithine amide (o-F-amidine) and N-alpha-(2-carboxyl)benzoyl-N(5)-(2-chloro-1-iminoethyl)-L-ornithine amide (o-Cl-amidine). Strongly and specifically inhibited by Thr-Asp-F-amidine (TDFA); other members of the family are not inhibited. Its function is as follows. Catalyzes the citrullination/deimination of arginine residues of proteins such as histones, thereby playing a key role in histone code and regulation of stem cell maintenance. Citrullinates histone H1 at 'Arg-54' (to form H1R54ci), histone H3 at 'Arg-2', 'Arg-8', 'Arg-17' and/or 'Arg-26' (to form H3R2ci, H3R8ci, H3R17ci, H3R26ci, respectively) and histone H4 at 'Arg-3' (to form H4R3ci). Acts as a key regulator of stem cell maintenance by mediating citrullination of histone H1: citrullination of 'Arg-54' of histone H1 (H1R54ci) results in H1 displacement from chromatin and global chromatin decondensation, thereby promoting pluripotency and stem cell maintenance. Promotes profound chromatin decondensation during the innate immune response to infection in neutrophils by mediating formation of H1R54ci. Required for the formation of neutrophil extracellular traps (NETs); NETs are mainly composed of DNA fibers and are released by neutrophils to bind pathogens during inflammation. Citrullination of histone H3 prevents their methylation by CARM1 and HRMT1L2/PRMT1 and represses transcription. Citrullinates EP300/P300 at 'Arg-2142', which favors its interaction with NCOA2/GRIP1. In Homo sapiens (Human), this protein is Protein-arginine deiminase type-4 (PADI4).